Reading from the N-terminus, the 165-residue chain is Lipoprotein signal peptidase (165 aa).

2 helical membrane passes run 68-88 (PLLP…GLFG) and 100-120 (GFLL…GEVI). Catalysis depends on residues D121 and D137. Residues 130–150 (FPVFNIADISINVGLACLIFA) traverse the membrane as a helical segment.

This sequence belongs to the peptidase A8 family.

Its subcellular location is the cell inner membrane. It catalyses the reaction Release of signal peptides from bacterial membrane prolipoproteins. Hydrolyzes -Xaa-Yaa-Zaa-|-(S,diacylglyceryl)Cys-, in which Xaa is hydrophobic (preferably Leu), and Yaa (Ala or Ser) and Zaa (Gly or Ala) have small, neutral side chains.. It participates in protein modification; lipoprotein biosynthesis (signal peptide cleavage). Functionally, this protein specifically catalyzes the removal of signal peptides from prolipoproteins. The protein is Lipoprotein signal peptidase of Acaryochloris marina (strain MBIC 11017).